The chain runs to 238 residues: Sugar fermentation stimulation protein homolog (238 aa).

It belongs to the SfsA family.

The protein is Sugar fermentation stimulation protein homolog of Alkalilimnicola ehrlichii (strain ATCC BAA-1101 / DSM 17681 / MLHE-1).